A 349-amino-acid chain; its full sequence is Putative inosamine-phosphate amidinotransferase 2 (349 aa).

This sequence belongs to the amidinotransferase family.

It catalyses the reaction 1-amino-1-deoxy-scyllo-inositol 4-phosphate + L-arginine = 1-guanidino-1-deoxy-scyllo-inositol 4-phosphate + L-ornithine. Its pathway is antibiotic biosynthesis; streptomycin biosynthesis. In terms of biological role, it is not obvious if strB2 participates in streptomycin biosynthesis as an inosamine-phosphate amidinotransferase. Attempt to measure its activity have failed and the nucleophilic cysteine which is the key residue for amidine transfer is not conserved but replaced by a glycine residue. In Streptomyces griseus, this protein is Putative inosamine-phosphate amidinotransferase 2 (strB2).